The sequence spans 314 residues: MQTASFKNGTLKIGTRGSKLALAQAYLTRRLLQEAHGLPEDAIEILPMSTAGDRIQDRPLSEVGGKGLFTEEIEQALKDGRIDIAVHSTKDMPTVLPEGLHLSVFLEREDPRDAFIGRSARRFMDLPQGATVGSSSLRRQALIRRLRPDIEVVMYRGNVDTRLRKLDAGEVDGTFLACAGLRRLGLADVITDLLDPSVFPPAPGQGAIGIESRIGDERIDVLLAPLAHRETQIALACERAFLGALDGSCRTPIAGLATVEGDRLSFRGMILTPDGRQAHEVTAEGVVSDAAALGTDAANRVRAMAGPHFFDGWQ.

Cysteine 249 is subject to S-(dipyrrolylmethanemethyl)cysteine.

Belongs to the HMBS family. As to quaternary structure, monomer. It depends on dipyrromethane as a cofactor.

The enzyme catalyses 4 porphobilinogen + H2O = hydroxymethylbilane + 4 NH4(+). Its pathway is porphyrin-containing compound metabolism; protoporphyrin-IX biosynthesis; coproporphyrinogen-III from 5-aminolevulinate: step 2/4. Its function is as follows. Tetrapolymerization of the monopyrrole PBG into the hydroxymethylbilane pre-uroporphyrinogen in several discrete steps. The chain is Porphobilinogen deaminase from Brucella suis biovar 1 (strain 1330).